The sequence spans 187 residues: Proline-rich protein 29 (187 aa).

Positions H133–P187 are disordered.

This chain is Proline-rich protein 29 (Prr29), found in Mus musculus (Mouse).